A 234-amino-acid chain; its full sequence is Endonuclease V (234 aa).

Residues aspartate 36 and aspartate 104 each contribute to the Mg(2+) site.

It belongs to the endonuclease V family. Requires Mg(2+) as cofactor.

Its subcellular location is the cytoplasm. The catalysed reaction is Endonucleolytic cleavage at apurinic or apyrimidinic sites to products with a 5'-phosphate.. Functionally, DNA repair enzyme involved in the repair of deaminated bases. Selectively cleaves double-stranded DNA at the second phosphodiester bond 3' to a deoxyinosine leaving behind the intact lesion on the nicked DNA. In Yersinia pseudotuberculosis serotype O:1b (strain IP 31758), this protein is Endonuclease V.